The sequence spans 353 residues: UPF0283 membrane protein YcjF (353 aa).

Residues 1 to 19 show a composition bias toward basic and acidic residues; that stretch reads MSEPLKPRIDFAEPLKEEP. The segment at 1–35 is disordered; it reads MSEPLKPRIDFAEPLKEEPTSAFKAQQTFSEAESR. 3 helical membrane-spanning segments follow: residues 70 to 90, 100 to 120, and 213 to 233; these read MVMG…LQWT, VALG…GSVV, and ESTL…FIAW.

Belongs to the UPF0283 family.

It localises to the cell inner membrane. The protein is UPF0283 membrane protein YcjF of Salmonella choleraesuis (strain SC-B67).